Here is a 545-residue protein sequence, read N- to C-terminus: Probable zinc metalloprotease EGY2, chloroplastic (545 aa).

A chloroplast-targeting transit peptide spans 1 to 63 (MQLPAMSCSP…QIRNRRFVCQ (63 aa)). The segment at 66 to 142 (TETEPDGDGN…DATPASDAQE (77 aa)) is disordered. Over residues 68 to 85 (TEPDGDGNGDEEKEELGD) the composition is skewed to acidic residues. Polar residues-rich tracts occupy residues 88–109 (SSPS…TNAD) and 117–129 (NTEP…TVQN). 7 helical membrane-spanning segments follow: residues 256–276 (AVPE…TLLL), 300–320 (VYGA…HILA), 325–345 (GIKL…FGAI), 363–383 (AAGP…GFIL), 426–446 (PLVL…IPAG), 473–493 (LLGI…LIFF), and 513–533 (YISI…PYPF).

It belongs to the peptidase M50B family.

The protein resides in the plastid. Its subcellular location is the chloroplast membrane. In terms of biological role, probable membrane-associated metalloprotease that may be involved in chloroplast development. The protein is Probable zinc metalloprotease EGY2, chloroplastic (EGY2) of Oryza sativa subsp. indica (Rice).